The primary structure comprises 239 residues: Ribosomal RNA small subunit methyltransferase G (239 aa).

Residues G78, F83, 129–130 (AE), and R148 contribute to the S-adenosyl-L-methionine site.

Belongs to the methyltransferase superfamily. RNA methyltransferase RsmG family.

Its subcellular location is the cytoplasm. Its function is as follows. Specifically methylates the N7 position of a guanine in 16S rRNA. This chain is Ribosomal RNA small subunit methyltransferase G, found in Clostridium beijerinckii (strain ATCC 51743 / NCIMB 8052) (Clostridium acetobutylicum).